The chain runs to 152 residues: Ribosome maturation factor RimP (152 aa).

The protein belongs to the RimP family.

It is found in the cytoplasm. Required for maturation of 30S ribosomal subunits. This chain is Ribosome maturation factor RimP, found in Ectopseudomonas mendocina (strain ymp) (Pseudomonas mendocina).